A 268-amino-acid chain; its full sequence is Ribosomal RNA small subunit methyltransferase A (268 aa).

S-adenosyl-L-methionine-binding residues include Asn23, Leu25, Gly50, Glu72, Asp94, and Asn116.

Belongs to the class I-like SAM-binding methyltransferase superfamily. rRNA adenine N(6)-methyltransferase family. RsmA subfamily.

Its subcellular location is the cytoplasm. It catalyses the reaction adenosine(1518)/adenosine(1519) in 16S rRNA + 4 S-adenosyl-L-methionine = N(6)-dimethyladenosine(1518)/N(6)-dimethyladenosine(1519) in 16S rRNA + 4 S-adenosyl-L-homocysteine + 4 H(+). Functionally, specifically dimethylates two adjacent adenosines (A1518 and A1519) in the loop of a conserved hairpin near the 3'-end of 16S rRNA in the 30S particle. May play a critical role in biogenesis of 30S subunits. This Mycoplasmoides gallisepticum (strain R(low / passage 15 / clone 2)) (Mycoplasma gallisepticum) protein is Ribosomal RNA small subunit methyltransferase A.